The sequence spans 592 residues: V-type ATP synthase alpha chain (592 aa).

G232–T239 lines the ATP pocket.

This sequence belongs to the ATPase alpha/beta chains family.

The enzyme catalyses ATP + H2O + 4 H(+)(in) = ADP + phosphate + 5 H(+)(out). In terms of biological role, produces ATP from ADP in the presence of a proton gradient across the membrane. The V-type alpha chain is a catalytic subunit. This is V-type ATP synthase alpha chain from Clostridium botulinum (strain Eklund 17B / Type B).